Reading from the N-terminus, the 335-residue chain is Sphingomyelinase C (335 aa).

The N-terminal stretch at 1-28 (MEKFKIIKTIPKICGAFIFLLFFTFLFG) is a signal peptide.

Belongs to the neutral sphingomyelinase family.

Its subcellular location is the secreted. It catalyses the reaction a sphingomyelin + H2O = phosphocholine + an N-acylsphing-4-enine + H(+). In terms of biological role, virulence factor that promotes intracellular proliferation by mediating the disruption of the phagocytic vacuole and the release of bacteria into the host cell cytosol. May act in concert with the phospholipases PlcA and PlcB and the hemolysin hly to mediate efficient escape from the vacuole. This Listeria ivanovii protein is Sphingomyelinase C (smcL).